Here is a 311-residue protein sequence, read N- to C-terminus: tRNA pseudouridine synthase B (311 aa).

Asp39 serves as the catalytic Nucleophile. The segment at 237–268 is disordered; that stretch reads RELSEQETTEISFGRRIAAGPGAGTPDAATAE. Low complexity predominate over residues 254–268; sequence AAGPGAGTPDAATAE.

This sequence belongs to the pseudouridine synthase TruB family. Type 1 subfamily.

It carries out the reaction uridine(55) in tRNA = pseudouridine(55) in tRNA. Functionally, responsible for synthesis of pseudouridine from uracil-55 in the psi GC loop of transfer RNAs. The protein is tRNA pseudouridine synthase B of Paenarthrobacter aurescens (strain TC1).